A 240-amino-acid chain; its full sequence is MIRNFLLFFMPIYAILFLSGCTANLSDPEIDFEPPAYVEEMPSKEDNKDFTSVGSVFGQGENPLFSDHKAMHVNDIVTVIISENTQSSNSGSKQISESDSLNLGGGAFTSAGTNSAVNSAVSKLNGIANLGFGSTSDSAYKGQGSATKDASFTTTVSARIVKVLQNGNYFISGKREILVDNQKQIIQIGGVIRPYDIDQGNRINSSQMSEAKILYKTQGDVERATDRGWGTKIIQSVWPF.

Residues Met1 to Gly20 form the signal peptide. The N-palmitoyl cysteine moiety is linked to residue Cys21. The S-diacylglycerol cysteine moiety is linked to residue Cys21.

This sequence belongs to the FlgH family. The basal body constitutes a major portion of the flagellar organelle and consists of four rings (L,P,S, and M) mounted on a central rod.

It is found in the cell outer membrane. Its subcellular location is the bacterial flagellum basal body. Its function is as follows. Assembles around the rod to form the L-ring and probably protects the motor/basal body from shearing forces during rotation. This is Flagellar L-ring protein from Sulfurimonas denitrificans (strain ATCC 33889 / DSM 1251) (Thiomicrospira denitrificans (strain ATCC 33889 / DSM 1251)).